We begin with the raw amino-acid sequence, 321 residues long: tRNA U34 carboxymethyltransferase (321 aa).

Carboxy-S-adenosyl-L-methionine is bound by residues Lys-90, Trp-104, Lys-109, Gly-129, 151–153 (DPT), 180–181 (IE), Met-195, Tyr-199, and Arg-314.

The protein belongs to the class I-like SAM-binding methyltransferase superfamily. CmoB family. In terms of assembly, homotetramer.

It carries out the reaction carboxy-S-adenosyl-L-methionine + 5-hydroxyuridine(34) in tRNA = 5-carboxymethoxyuridine(34) in tRNA + S-adenosyl-L-homocysteine + H(+). Its function is as follows. Catalyzes carboxymethyl transfer from carboxy-S-adenosyl-L-methionine (Cx-SAM) to 5-hydroxyuridine (ho5U) to form 5-carboxymethoxyuridine (cmo5U) at position 34 in tRNAs. The sequence is that of tRNA U34 carboxymethyltransferase from Mannheimia succiniciproducens (strain KCTC 0769BP / MBEL55E).